The sequence spans 279 residues: Phosphate-binding protein PstS (279 aa).

The first 18 residues, 1 to 18 (MKKVIILIFMLSTSLLYN), serve as a signal peptide directing secretion. Cys-19 is lipidated: N-palmitoyl cysteine. Residue Cys-19 is the site of S-diacylglycerol cysteine attachment. Residues 33–35 (STT), Ser-63, and 151–153 (SGS) each bind phosphate.

This sequence belongs to the PstS family. Monomer (in vitro). The complex is composed of two ATP-binding proteins (PstB), two transmembrane proteins (PstC and PstA) and a solute-binding protein (PstS).

The protein resides in the cell membrane. Functionally, binds inorganic phosphate with a Kd of 1.2 uM. Part of the ABC transporter complex PstSACB involved in phosphate import. In Borreliella burgdorferi (strain ATCC 35210 / DSM 4680 / CIP 102532 / B31) (Borrelia burgdorferi), this protein is Phosphate-binding protein PstS.